The chain runs to 36 residues: Toxin Bcg III 29.21 (36 aa).

Cysteine 6 and cysteine 31 are oxidised to a cystine.

It is found in the secreted. It localises to the nematocyst. This is Toxin Bcg III 29.21 from Bunodosoma cangicum (Sea anemone).